A 329-amino-acid polypeptide reads, in one-letter code: MNPVDYLRISLIDRCNFRCHYCVPDEASLQYLLTSEQLSNGEILTLLEQVFIPLGFRKFRLTGGEPLLRPQLVPLVRAIAHLPGVEDLSMTTNAYLLADLAQDLYNAGLNRLNISLDSLNPETFDQIIGNRGKSRWQQTWEGIQAAHRVGFDPLKLNVVVIPGVNDQEVLDLAALTGDRHWHVRFIEFMPIGNDKLFNERAWIPSEELRQRIRAKWGLETAFVQGNGPADIFKIPGAKGTLGFISQMSECFCDRCNRMRLSADGWLRPCLLNEAAQMDLKTLLRTGVPPREIRAAVKALLDQKPEINFKMRDMGTTTGQYGRTMSQIGG.

In terms of domain architecture, Radical SAM core spans 1–229; sequence MNPVDYLRIS…TAFVQGNGPA (229 aa). Arginine 8 provides a ligand contact to GTP. 2 residues coordinate [4Fe-4S] cluster: cysteine 15 and cysteine 19. Tyrosine 21 contributes to the S-adenosyl-L-methionine binding site. Cysteine 22 contributes to the [4Fe-4S] cluster binding site. Residue arginine 60 coordinates GTP. An S-adenosyl-L-methionine-binding site is contributed by glycine 64. Threonine 91 serves as a coordination point for GTP. An S-adenosyl-L-methionine-binding site is contributed by serine 115. Position 155 (lysine 155) interacts with GTP. Residue methionine 189 participates in S-adenosyl-L-methionine binding. [4Fe-4S] cluster is bound by residues cysteine 252 and cysteine 255. 257-259 contributes to the GTP binding site; the sequence is RMR. Residue cysteine 269 coordinates [4Fe-4S] cluster.

It belongs to the radical SAM superfamily. MoaA family. In terms of assembly, monomer and homodimer. Requires [4Fe-4S] cluster as cofactor.

The enzyme catalyses GTP + AH2 + S-adenosyl-L-methionine = (8S)-3',8-cyclo-7,8-dihydroguanosine 5'-triphosphate + 5'-deoxyadenosine + L-methionine + A + H(+). Its pathway is cofactor biosynthesis; molybdopterin biosynthesis. Catalyzes the cyclization of GTP to (8S)-3',8-cyclo-7,8-dihydroguanosine 5'-triphosphate. The protein is GTP 3',8-cyclase of Picosynechococcus sp. (strain ATCC 27264 / PCC 7002 / PR-6) (Agmenellum quadruplicatum).